The primary structure comprises 321 residues: Glutaminase (321 aa).

Residues Ser69, Asn120, Glu165, Asn172, Tyr196, Tyr248, and Val266 each coordinate substrate.

This sequence belongs to the glutaminase family. In terms of assembly, homotetramer.

It carries out the reaction L-glutamine + H2O = L-glutamate + NH4(+). This Parabacteroides distasonis (strain ATCC 8503 / DSM 20701 / CIP 104284 / JCM 5825 / NCTC 11152) protein is Glutaminase.